The sequence spans 86 residues: Serine protease inhibitor Kazal-type 4 (86 aa).

The first 26 residues, 1–26 (MAMHLWLVTLTLVPLLGMDRELMVSA), serve as a signal peptide directing secretion. One can recognise a Kazal-like domain in the interval 31 to 86 (FPRMPFCEHMAELPNCPQTPNLICGTDGLTYENECHLCLTRMKTMKDIQIMKDGQC). 3 disulfides stabilise this stretch: cysteine 37–cysteine 68, cysteine 46–cysteine 65, and cysteine 54–cysteine 86.

In terms of tissue distribution, expressed in the intestinal tract.

Its subcellular location is the secreted. This is Serine protease inhibitor Kazal-type 4 (Spink4) from Mus musculus (Mouse).